We begin with the raw amino-acid sequence, 181 residues long: Large ribosomal subunit protein uL5 (181 aa).

Belongs to the universal ribosomal protein uL5 family. As to quaternary structure, part of the 50S ribosomal subunit; part of the 5S rRNA/L5/L18/L25 subcomplex. Contacts the 5S rRNA and the P site tRNA. Forms a bridge to the 30S subunit in the 70S ribosome.

Its function is as follows. This is one of the proteins that bind and probably mediate the attachment of the 5S RNA into the large ribosomal subunit, where it forms part of the central protuberance. In the 70S ribosome it contacts protein S13 of the 30S subunit (bridge B1b), connecting the 2 subunits; this bridge is implicated in subunit movement. Contacts the P site tRNA; the 5S rRNA and some of its associated proteins might help stabilize positioning of ribosome-bound tRNAs. The sequence is that of Large ribosomal subunit protein uL5 from Helicobacter pylori (strain G27).